Here is a 78-residue protein sequence, read N- to C-terminus: Small ribosomal subunit protein bS18B (78 aa).

The protein belongs to the bacterial ribosomal protein bS18 family. Part of the 30S ribosomal subunit. Forms a tight heterodimer with protein bS6.

Functionally, binds as a heterodimer with protein bS6 to the central domain of the 16S rRNA, where it helps stabilize the platform of the 30S subunit. The polypeptide is Small ribosomal subunit protein bS18B (Streptomyces griseus subsp. griseus (strain JCM 4626 / CBS 651.72 / NBRC 13350 / KCC S-0626 / ISP 5235)).